The primary structure comprises 289 residues: ATP synthase gamma chain (289 aa).

It belongs to the ATPase gamma chain family. In terms of assembly, F-type ATPases have 2 components, CF(1) - the catalytic core - and CF(0) - the membrane proton channel. CF(1) has five subunits: alpha(3), beta(3), gamma(1), delta(1), epsilon(1). CF(0) has three main subunits: a, b and c.

It localises to the cell inner membrane. In terms of biological role, produces ATP from ADP in the presence of a proton gradient across the membrane. The gamma chain is believed to be important in regulating ATPase activity and the flow of protons through the CF(0) complex. The sequence is that of ATP synthase gamma chain from Haemophilus influenzae (strain PittEE).